Here is a 353-residue protein sequence, read N- to C-terminus: Ion-translocating oxidoreductase complex subunit D (353 aa).

Transmembrane regions (helical) follow at residues 20 to 39 (LMRL…WYFF), 68 to 88 (PISH…LGIC), and 129 to 149 (VMLL…LTLV). Threonine 187 is subject to FMN phosphoryl threonine. The next 4 membrane-spanning stretches (helical) occupy residues 215–235 (LALG…FLIS), 238–258 (AIAW…SFIG), 267–287 (ASTM…FILT), and 300–320 (IIVG…GGYP).

This sequence belongs to the NqrB/RnfD family. The complex is composed of six subunits: RnfA, RnfB, RnfC, RnfD, RnfE and RnfG. The cofactor is FMN.

It localises to the cell inner membrane. In terms of biological role, part of a membrane-bound complex that couples electron transfer with translocation of ions across the membrane. This chain is Ion-translocating oxidoreductase complex subunit D, found in Colwellia psychrerythraea (strain 34H / ATCC BAA-681) (Vibrio psychroerythus).